The following is a 178-amino-acid chain: ATP-dependent protease subunit HslV (178 aa).

Residue threonine 2 is part of the active site. Residues serine 159, cysteine 162, and threonine 165 each contribute to the Na(+) site.

The protein belongs to the peptidase T1B family. HslV subfamily. In terms of assembly, a double ring-shaped homohexamer of HslV is capped on each side by a ring-shaped HslU homohexamer. The assembly of the HslU/HslV complex is dependent on binding of ATP.

It is found in the cytoplasm. The enzyme catalyses ATP-dependent cleavage of peptide bonds with broad specificity.. With respect to regulation, allosterically activated by HslU binding. Its function is as follows. Protease subunit of a proteasome-like degradation complex believed to be a general protein degrading machinery. The polypeptide is ATP-dependent protease subunit HslV (Buchnera aphidicola subsp. Cinara cedri (strain Cc)).